We begin with the raw amino-acid sequence, 170 residues long: Probable T4-type lysozyme 1 (170 aa).

E13 (proton donor) is an active-site residue. D22 acts as the Nucleophile in catalysis.

Belongs to the glycosyl hydrolase 24 family.

It catalyses the reaction Hydrolysis of (1-&gt;4)-beta-linkages between N-acetylmuramic acid and N-acetyl-D-glucosamine residues in a peptidoglycan and between N-acetyl-D-glucosamine residues in chitodextrins.. This Dictyostelium discoideum (Social amoeba) protein is Probable T4-type lysozyme 1.